A 201-amino-acid chain; its full sequence is Small ribosomal subunit protein uS4 (201 aa).

Residues 91–154 (TRLDNVVYRA…RKMEWFEEAQ (64 aa)) enclose the S4 RNA-binding domain.

This sequence belongs to the universal ribosomal protein uS4 family. In terms of assembly, part of the 30S ribosomal subunit. Contacts protein S5. The interaction surface between S4 and S5 is involved in control of translational fidelity.

One of the primary rRNA binding proteins, it binds directly to 16S rRNA where it nucleates assembly of the body of the 30S subunit. Its function is as follows. With S5 and S12 plays an important role in translational accuracy. The protein is Small ribosomal subunit protein uS4 of Corynebacterium ammoniagenes (Brevibacterium ammoniagenes).